Consider the following 470-residue polypeptide: Aminodeoxychorismate synthase component 1 (470 aa).

The protein belongs to the anthranilate synthase component I family. As to quaternary structure, monomer. Heterodimer consisting of two non-identical subunits: a glutamine amidotransferase subunit (PabA) and a aminodeoxychorismate synthase subunit (PabB). Requires Mg(2+) as cofactor.

The enzyme catalyses chorismate + L-glutamine = 4-amino-4-deoxychorismate + L-glutamate. The protein operates within cofactor biosynthesis; tetrahydrofolate biosynthesis; 4-aminobenzoate from chorismate: step 1/2. Its function is as follows. Part of a heterodimeric complex that catalyzes the two-step biosynthesis of 4-amino-4-deoxychorismate (ADC), a precursor of p-aminobenzoate (PABA) and tetrahydrofolate. In the first step, a glutamine amidotransferase (PabA) generates ammonia as a substrate that, along with chorismate, is used in the second step, catalyzed by aminodeoxychorismate synthase (PabB) to produce ADC. The chain is Aminodeoxychorismate synthase component 1 (pabB) from Bacillus subtilis (strain 168).